A 284-amino-acid polypeptide reads, in one-letter code: RNase adapter protein RapZ (284 aa).

8 to 15 lines the ATP pocket; the sequence is GRSGSGKS. 56–59 is a GTP binding site; it reads DVRN. Positions 266–284 are RNA-binding; it reads RSRGKNVQSRHRTLEKRKT.

This sequence belongs to the RapZ-like family. RapZ subfamily. Homotrimer.

In terms of biological role, modulates the synthesis of GlmS, by affecting the processing and stability of the regulatory small RNA GlmZ. When glucosamine-6-phosphate (GlcN6P) concentrations are high in the cell, RapZ binds GlmZ and targets it to cleavage by RNase E. Consequently, GlmZ is inactivated and unable to activate GlmS synthesis. Under low GlcN6P concentrations, RapZ is sequestered and inactivated by an other regulatory small RNA, GlmY, preventing GlmZ degradation and leading to synthesis of GlmS. The chain is RNase adapter protein RapZ from Citrobacter koseri (strain ATCC BAA-895 / CDC 4225-83 / SGSC4696).